The chain runs to 573 residues: 60 kDa heat shock protein, mitochondrial (573 aa).

Residues 1 to 26 (MLRLPTVFRQMRPVSRVLAPHLTRAY) constitute a mitochondrion transit peptide. Residue Lys-31 is modified to N6-succinyllysine. Phosphoserine is present on residues Ser-67 and Ser-70. Lys-75 is an ATP binding site. Lys-75 bears the N6-acetyllysine mark. Lys-82 bears the N6-acetyllysine; alternate mark. Lys-82 is modified (N6-succinyllysine; alternate). An N6-acetyllysine modification is found at Lys-87. At Tyr-90 the chain carries Phosphotyrosine. Lys-91 is subject to N6-acetyllysine. 111-115 (DGTTT) contacts ATP. Lys-125 is modified (N6-acetyllysine; alternate). Lys-125 is subject to N6-succinyllysine; alternate. Residue Lys-130 is modified to N6-acetyllysine. Lys-133 carries the N6-acetyllysine; alternate modification. N6-succinyllysine; alternate is present on Lys-133. Lys-133 carries the N6-malonyllysine; alternate modification. N6-acetyllysine is present on Lys-156. 5 positions are modified to N6-acetyllysine; alternate: Lys-191, Lys-202, Lys-205, Lys-218, and Lys-236. 5 positions are modified to N6-succinyllysine; alternate: Lys-191, Lys-202, Lys-205, Lys-218, and Lys-236. Lys-249 carries the N6-acetyllysine modification. Lys-250 is modified (N6-acetyllysine; alternate). Lys-250 is modified (N6-succinyllysine; alternate). N6-acetyllysine occurs at positions 269 and 292. At Lys-301 the chain carries N6-succinyllysine. An N6-acetyllysine modification is found at Lys-314. Position 352 is an N6-acetyllysine; alternate (Lys-352). Lys-352 is modified (N6-succinyllysine; alternate). An N6-acetyllysine mark is found at Lys-359 and Lys-389. Lys-396 bears the N6-acetyllysine; alternate mark. An N6-succinyllysine; alternate modification is found at Lys-396. Ser-410 bears the Phosphoserine mark. Residue Gly-440 participates in ATP binding. N6-acetyllysine is present on Lys-469. Position 481 is an N6-acetyllysine; alternate (Lys-481). The residue at position 481 (Lys-481) is an N6-succinyllysine; alternate. A Phosphoserine modification is found at Ser-488. Residue Asp-520 participates in ATP binding. Lys-551 participates in a covalent cross-link: Glycyl lysine isopeptide (Lys-Gly) (interchain with G-Cter in SUMO2).

Belongs to the chaperonin (HSP60) family. In terms of assembly, homoheptamer arranged in a ring structure. The functional units of these chaperonins consist of heptameric rings of the large subunit Hsp60, which function as a back-to-back double ring. Interacts with 2 heptameric Hsp10 rings to form the symmetrical football complex. Interacts with HRAS. Interacts with ATAD3A. Interacts with ETFBKMT and EEF1AKMT3. Interacts with MFHAS1. As to quaternary structure, (Microbial infection) Interacts with hepatitis B virus/HBV protein X. (Microbial infection) Interacts with HTLV-1 protein p40tax.

The protein resides in the mitochondrion matrix. It carries out the reaction ATP + H2O + a folded polypeptide = ADP + phosphate + an unfolded polypeptide.. Its function is as follows. Chaperonin implicated in mitochondrial protein import and macromolecular assembly. Together with Hsp10, facilitates the correct folding of imported proteins. May also prevent misfolding and promote the refolding and proper assembly of unfolded polypeptides generated under stress conditions in the mitochondrial matrix. The functional units of these chaperonins consist of heptameric rings of the large subunit Hsp60, which function as a back-to-back double ring. In a cyclic reaction, Hsp60 ring complexes bind one unfolded substrate protein per ring, followed by the binding of ATP and association with 2 heptameric rings of the co-chaperonin Hsp10. This leads to sequestration of the substrate protein in the inner cavity of Hsp60 where, for a certain period of time, it can fold undisturbed by other cell components. Synchronous hydrolysis of ATP in all Hsp60 subunits results in the dissociation of the chaperonin rings and the release of ADP and the folded substrate protein. The sequence is that of 60 kDa heat shock protein, mitochondrial (HSPD1) from Homo sapiens (Human).